The sequence spans 517 residues: Bifunctional purine biosynthesis protein PurH (517 aa).

The MGS-like domain occupies 1 to 146; that stretch reads MGRLVLLSVS…KNFAHLTVLC (146 aa).

It belongs to the PurH family.

The enzyme catalyses (6R)-10-formyltetrahydrofolate + 5-amino-1-(5-phospho-beta-D-ribosyl)imidazole-4-carboxamide = 5-formamido-1-(5-phospho-D-ribosyl)imidazole-4-carboxamide + (6S)-5,6,7,8-tetrahydrofolate. It carries out the reaction IMP + H2O = 5-formamido-1-(5-phospho-D-ribosyl)imidazole-4-carboxamide. It functions in the pathway purine metabolism; IMP biosynthesis via de novo pathway; 5-formamido-1-(5-phospho-D-ribosyl)imidazole-4-carboxamide from 5-amino-1-(5-phospho-D-ribosyl)imidazole-4-carboxamide (10-formyl THF route): step 1/1. The protein operates within purine metabolism; IMP biosynthesis via de novo pathway; IMP from 5-formamido-1-(5-phospho-D-ribosyl)imidazole-4-carboxamide: step 1/1. The sequence is that of Bifunctional purine biosynthesis protein PurH from Gloeothece citriformis (strain PCC 7424) (Cyanothece sp. (strain PCC 7424)).